Here is a 229-residue protein sequence, read N- to C-terminus: Urease accessory protein UreG (229 aa).

Residue 24–31 (GPVGSGKT) participates in GTP binding.

This sequence belongs to the SIMIBI class G3E GTPase family. UreG subfamily. Homodimer. UreD, UreF and UreG form a complex that acts as a GTP-hydrolysis-dependent molecular chaperone, activating the urease apoprotein by helping to assemble the nickel containing metallocenter of UreC. The UreE protein probably delivers the nickel.

The protein localises to the cytoplasm. Facilitates the functional incorporation of the urease nickel metallocenter. This process requires GTP hydrolysis, probably effectuated by UreG. This is Urease accessory protein UreG from Albidiferax ferrireducens (strain ATCC BAA-621 / DSM 15236 / T118) (Rhodoferax ferrireducens).